The primary structure comprises 269 residues: Chymotrypsin-like elastase family member 2A (269 aa).

The signal sequence occupies residues 1–16 (MIRALLLSTLVAGALS). A propeptide spans 17-28 (CGVPTYPPQLSR) (activation peptide). The 239-residue stretch at 29 to 267 (VVGGEDARPN…YNDWISSVIE (239 aa)) folds into the Peptidase S1 domain. A disulfide bridge links C58 with C74. Active-site charge relay system residues include H73 and D121. Intrachain disulfides connect C155–C222, C186–C202, and C212–C243. The Charge relay system role is filled by S216.

It belongs to the peptidase S1 family. Elastase subfamily. In terms of assembly, interacts with CPA1. Interacts with SERPINA1. As to expression, pancreas.

The protein localises to the secreted. It catalyses the reaction Preferential cleavage: Leu-|-Xaa, Met-|-Xaa and Phe-|-Xaa. Hydrolyzes elastin.. Elastase that enhances insulin signaling and might have a physiologic role in cellular glucose metabolism. Circulates in plasma and reduces platelet hyperactivation, triggers both insulin secretion and degradation, and increases insulin sensitivity. This Bos taurus (Bovine) protein is Chymotrypsin-like elastase family member 2A (CELA2A).